We begin with the raw amino-acid sequence, 642 residues long: Threonine--tRNA ligase (642 aa).

The 61-residue stretch at 1 to 61 folds into the TGS domain; it reads MPVITLPDGS…DTDSELSIIT (61 aa). A catalytic region spans residues 243-534; the sequence is DHRKIGKQLD…LIEEYAGKFP (292 aa). Residues Cys334, His385, and His511 each contribute to the Zn(2+) site.

The protein belongs to the class-II aminoacyl-tRNA synthetase family. Homodimer. Zn(2+) is required as a cofactor.

The protein resides in the cytoplasm. The enzyme catalyses tRNA(Thr) + L-threonine + ATP = L-threonyl-tRNA(Thr) + AMP + diphosphate + H(+). Its function is as follows. Catalyzes the attachment of threonine to tRNA(Thr) in a two-step reaction: L-threonine is first activated by ATP to form Thr-AMP and then transferred to the acceptor end of tRNA(Thr). Also edits incorrectly charged L-seryl-tRNA(Thr). This chain is Threonine--tRNA ligase, found in Shewanella woodyi (strain ATCC 51908 / MS32).